The sequence spans 832 residues: G-type lectin S-receptor-like serine/threonine-protein kinase RLK1 (832 aa).

Residues methionine 1–serine 24 form the signal peptide. The Extracellular segment spans residues glutamine 25–lysine 461. 6 N-linked (GlcNAc...) asparagine glycosylation sites follow: asparagine 29, asparagine 92, asparagine 100, asparagine 178, asparagine 240, and asparagine 251. Residues serine 37 to tryptophan 157 enclose the Bulb-type lectin domain. One can recognise an EGF-like; atypical domain in the interval arginine 299 to leucine 349. Intrachain disulfides connect cysteine 303–cysteine 320, cysteine 314–cysteine 330, and cysteine 332–cysteine 348. A PAN domain is found at cysteine 357–asparagine 446. Asparagine 361 is a glycosylation site (N-linked (GlcNAc...) asparagine). Disulfide bonds link cysteine 397-cysteine 420 and cysteine 401-cysteine 407. Asparagine 446 is a glycosylation site (N-linked (GlcNAc...) asparagine). A helical transmembrane segment spans residues leucine 462 to aspartate 482. The Cytoplasmic segment spans residues threonine 483–valine 832. The Protein kinase domain occupies arginine 531–isoleucine 803. ATP contacts are provided by residues leucine 537–valine 545 and lysine 563. Residues arginine 622–isoleucine 638 form a caM-binding region. Catalysis depends on aspartate 657, which acts as the Proton acceptor.

Belongs to the protein kinase superfamily. Ser/Thr protein kinase family.

The protein localises to the cell membrane. The catalysed reaction is L-seryl-[protein] + ATP = O-phospho-L-seryl-[protein] + ADP + H(+). The enzyme catalyses L-threonyl-[protein] + ATP = O-phospho-L-threonyl-[protein] + ADP + H(+). The chain is G-type lectin S-receptor-like serine/threonine-protein kinase RLK1 (RLK1) from Arabidopsis thaliana (Mouse-ear cress).